A 972-amino-acid polypeptide reads, in one-letter code: Optomotor-blind protein (972 aa).

Disordered regions lie at residues serine 44–alanine 248, proline 263–histidine 286, alanine 508–alanine 563, alanine 645–proline 676, alanine 805–leucine 889, and glutamate 918–glutamine 972. 2 stretches are compositionally biased toward low complexity: residues glycine 49–asparagine 80 and serine 97–serine 142. The span at proline 155 to asparagine 176 shows a compositional bias: pro residues. Low complexity-rich tracts occupy residues asparagine 177–histidine 193 and alanine 201–proline 212. Residues proline 213–proline 225 show a composition bias toward pro residues. Residues histidine 226–histidine 237 show a composition bias toward low complexity. Residues proline 274–histidine 286 are compositionally biased toward basic residues. Positions leucine 332 to aspartate 513 form a DNA-binding region, T-box. The span at proline 818–valine 831 shows a compositional bias: gly residues. The span at proline 835–proline 851 shows a compositional bias: low complexity. Serine 887 carries the post-translational modification Phosphoserine. The segment covering histidine 952–histidine 963 has biased composition (basic residues).

In terms of tissue distribution, in third-instar larvae, expressed in the brain region that will develop into optic lobes and more weakly in the thoracic part of the ventral ganglion.

The protein localises to the nucleus. Its function is as follows. Essential protein that may function as a transcription regulator. Vital for pupal development. Required for proper development of the optic lobes and wings, and abdominal pigmentation. In Drosophila melanogaster (Fruit fly), this protein is Optomotor-blind protein (bi).